We begin with the raw amino-acid sequence, 230 residues long: uncharacterized protein (230 aa).

To E.coli HemX N-terminal region.

This is an uncharacterized protein from Haemophilus influenzae (strain ATCC 51907 / DSM 11121 / KW20 / Rd).